We begin with the raw amino-acid sequence, 875 residues long: DNA mismatch repair protein MutS (875 aa).

Position 626-633 (626-633 (GPNMAGKS)) interacts with ATP. Positions 830 to 855 (RAAPPPPAPAAPKTSPVEERLREIQP) are disordered. Residues 845-855 (PVEERLREIQP) show a composition bias toward basic and acidic residues.

It belongs to the DNA mismatch repair MutS family.

In terms of biological role, this protein is involved in the repair of mismatches in DNA. It is possible that it carries out the mismatch recognition step. This protein has a weak ATPase activity. This is DNA mismatch repair protein MutS from Cereibacter sphaeroides (strain ATCC 17023 / DSM 158 / JCM 6121 / CCUG 31486 / LMG 2827 / NBRC 12203 / NCIMB 8253 / ATH 2.4.1.) (Rhodobacter sphaeroides).